Reading from the N-terminus, the 613-residue chain is ATP-dependent RNA helicase DRS1 (613 aa).

2 disordered regions span residues 1–20 (MPDF…SDSE) and 79–104 (GFGM…PEVK). Acidic residues-rich tracts occupy residues 9–18 (DSDEEVDVSD) and 88–100 (EEEE…EVEV). The short motif at 130–158 (TSFQTLQLSRPVLKGIAELKFTKPTPIQS) is the Q motif element. The 175-residue stretch at 161 to 335 (IPIALLGKDI…QLSLQKPVRI (175 aa)) folds into the Helicase ATP-binding domain. 174 to 181 (AQTGSGKT) is a binding site for ATP. The DEAD box signature appears at 282-285 (DEAD). In terms of domain architecture, Helicase C-terminal spans 364–541 (LLYQLLKGVS…ELLRAEMELT (178 aa)). Residues 504–552 (KQAEETNKLLESKESVIDEVLEEEKEAKELLRAEMELTKASNLIKHEQE) are a coiled coil. The disordered stretch occupies residues 571 to 613 (TKHGKKVNSKKRKANEVRKDEGRSYKKTKTDRMKISNKKKSKK). Basic residues predominate over residues 572–583 (KHGKKVNSKKRK). Residues 584-604 (ANEVRKDEGRSYKKTKTDRMK) are compositionally biased toward basic and acidic residues.

Belongs to the DEAD box helicase family. DDX27/DRS1 subfamily. As to quaternary structure, associates with pre-ribosomal particles.

It is found in the nucleus. Its subcellular location is the nucleolus. It carries out the reaction ATP + H2O = ADP + phosphate + H(+). ATP-binding RNA helicase involved in ribosome assembly. The protein is ATP-dependent RNA helicase DRS1 (DRS1) of Candida albicans (strain SC5314 / ATCC MYA-2876) (Yeast).